The sequence spans 467 residues: UDP-N-acetylmuramoylalanine--D-glutamate ligase (467 aa).

ATP is bound at residue 121–127 (GTNGKST).

It belongs to the MurCDEF family.

It localises to the cytoplasm. It catalyses the reaction UDP-N-acetyl-alpha-D-muramoyl-L-alanine + D-glutamate + ATP = UDP-N-acetyl-alpha-D-muramoyl-L-alanyl-D-glutamate + ADP + phosphate + H(+). It functions in the pathway cell wall biogenesis; peptidoglycan biosynthesis. In terms of biological role, cell wall formation. Catalyzes the addition of glutamate to the nucleotide precursor UDP-N-acetylmuramoyl-L-alanine (UMA). This is UDP-N-acetylmuramoylalanine--D-glutamate ligase from Brucella abortus (strain 2308).